A 324-amino-acid polypeptide reads, in one-letter code: Phospho-N-acetylmuramoyl-pentapeptide-transferase (324 aa).

The next 10 helical transmembrane spans lie at 5-25 (AIVI…PLFI), 57-77 (IMIL…IAGL), 81-101 (TYLL…DDMI), 117-137 (FIGQ…SGFS), 147-167 (WSVD…VGGS), 176-196 (LDGL…VLAW), 203-223 (VAVF…FNAH), 227-247 (VFMG…VAVL), 250-270 (LELL…SVII), and 302-322 (IVVT…YIEV).

It belongs to the glycosyltransferase 4 family. MraY subfamily. Mg(2+) is required as a cofactor.

The protein localises to the cell membrane. The catalysed reaction is UDP-N-acetyl-alpha-D-muramoyl-L-alanyl-gamma-D-glutamyl-meso-2,6-diaminopimeloyl-D-alanyl-D-alanine + di-trans,octa-cis-undecaprenyl phosphate = di-trans,octa-cis-undecaprenyl diphospho-N-acetyl-alpha-D-muramoyl-L-alanyl-D-glutamyl-meso-2,6-diaminopimeloyl-D-alanyl-D-alanine + UMP. Its pathway is cell wall biogenesis; peptidoglycan biosynthesis. Catalyzes the initial step of the lipid cycle reactions in the biosynthesis of the cell wall peptidoglycan: transfers peptidoglycan precursor phospho-MurNAc-pentapeptide from UDP-MurNAc-pentapeptide onto the lipid carrier undecaprenyl phosphate, yielding undecaprenyl-pyrophosphoryl-MurNAc-pentapeptide, known as lipid I. The chain is Phospho-N-acetylmuramoyl-pentapeptide-transferase from Geobacillus kaustophilus (strain HTA426).